Here is a 387-residue protein sequence, read N- to C-terminus: Phosphoglycerate kinase (387 aa).

Substrate is bound by residues 21 to 23 (DLN), arginine 36, 59 to 62 (HLGR), arginine 113, and arginine 146. Residues lysine 197, glutamate 314, and 340 to 343 (GGDT) contribute to the ATP site.

Belongs to the phosphoglycerate kinase family. In terms of assembly, monomer.

Its subcellular location is the cytoplasm. The enzyme catalyses (2R)-3-phosphoglycerate + ATP = (2R)-3-phospho-glyceroyl phosphate + ADP. It participates in carbohydrate degradation; glycolysis; pyruvate from D-glyceraldehyde 3-phosphate: step 2/5. This chain is Phosphoglycerate kinase, found in Enterobacter sp. (strain 638).